The sequence spans 607 residues: Chaperone protein DnaK (607 aa).

Threonine 174 is subject to Phosphothreonine; by autocatalysis. A disordered region spans residues 571-607; it reads AAMYQKQAQQQQPGPGPDAGKDKDDKDKTVDADYEVK. Residues 589-607 show a composition bias toward basic and acidic residues; the sequence is AGKDKDDKDKTVDADYEVK.

Belongs to the heat shock protein 70 family.

Its function is as follows. Acts as a chaperone. The chain is Chaperone protein DnaK from Desulforudis audaxviator (strain MP104C).